We begin with the raw amino-acid sequence, 31 residues long: Cytochrome b6-f complex subunit 6 (31 aa).

A helical transmembrane segment spans residues 4–24 (LTSYFGFLLAALTITPALFIG).

This sequence belongs to the PetL family. As to quaternary structure, the 4 large subunits of the cytochrome b6-f complex are cytochrome b6, subunit IV (17 kDa polypeptide, PetD), cytochrome f and the Rieske protein, while the 4 small subunits are PetG, PetL, PetM and PetN. The complex functions as a dimer.

The protein resides in the plastid. The protein localises to the chloroplast thylakoid membrane. Component of the cytochrome b6-f complex, which mediates electron transfer between photosystem II (PSII) and photosystem I (PSI), cyclic electron flow around PSI, and state transitions. PetL is important for photoautotrophic growth as well as for electron transfer efficiency and stability of the cytochrome b6-f complex. The chain is Cytochrome b6-f complex subunit 6 from Agrostis stolonifera (Creeping bentgrass).